Consider the following 236-residue polypeptide: Small ribosomal subunit protein uS5 (236 aa).

Residues 61 to 124 form the S5 DRBM domain; it reads ENQEIIDIAL…NYAKLNIIEI (64 aa).

Belongs to the universal ribosomal protein uS5 family. Part of the 30S ribosomal subunit. Contacts protein S4.

With S4 and S12 plays an important role in translational accuracy. The polypeptide is Small ribosomal subunit protein uS5 (Pyrococcus horikoshii (strain ATCC 700860 / DSM 12428 / JCM 9974 / NBRC 100139 / OT-3)).